The primary structure comprises 382 residues: Layilin (382 aa).

An N-terminal signal peptide occupies residues 1 to 21; sequence MRPGTALQAVLLAVLLVGLRA. Residues 22 to 235 are Extracellular-facing; sequence ATGRLLSASD…SREAALNLAY (214 aa). Residues 45-185 enclose the C-type lectin domain; sequence TQRPCYKVIY…CNMKNNFICK (141 aa). 2 disulfide bridges follow: Cys-71-Cys-184 and Cys-150-Cys-176. An N-linked (GlcNAc...) asparagine glycan is attached at Asn-117. A helical transmembrane segment spans residues 236–256; the sequence is ILIPSIPLLLLLVVTTVVCWV. Over 257–382 the chain is Cytoplasmic; it reads WICRKRKREQ…GWVENEIYGY (126 aa). The segment at 266–285 is disordered; that stretch reads QPDPSTKKQHTIWPSPHQGN. Residues Ser-286 and Ser-299 each carry the phosphoserine modification. Positions 330-374 are interaction with NF2; it reads DYDNMAVNPSESGFVTLVSVESGFVTNDIYEFSPDQMGRSKESGW. The segment at 337 to 382 is interaction with TLN1; sequence NPSESGFVTLVSVESGFVTNDIYEFSPDQMGRSKESGWVENEIYGY. 5 consecutive repeat copies span residues 340–344, 350–354, 356–359, 371–375, and 377–380. The tract at residues 340–375 is 3 X 5 AA repeats of E-S-G-X-V; that stretch reads ESGFVTLVSVESGFVTNDIYEFSPDQMGRSKESGWV. Positions 356 to 380 are 2 X 4 AA repeats of N-X-I-Y; that stretch reads NDIYEFSPDQMGRSKESGWVENEIY.

Interacts with NF2, RDX and TLN1.

The protein localises to the membrane. Its function is as follows. Receptor for hyaluronate. This chain is Layilin (LAYN), found in Homo sapiens (Human).